A 607-amino-acid chain; its full sequence is UvrABC system protein C (607 aa).

The region spanning 16-94 is the GIY-YIG domain; the sequence is GRPGVYRMFD…IKEWRPPYNI (79 aa). Residues 203–238 form the UVR domain; it reads NALTDELSAGMEQAASTLDFEKAAELRDQISLLRRV.

The protein belongs to the UvrC family. Interacts with UvrB in an incision complex.

The protein localises to the cytoplasm. Its function is as follows. The UvrABC repair system catalyzes the recognition and processing of DNA lesions. UvrC both incises the 5' and 3' sides of the lesion. The N-terminal half is responsible for the 3' incision and the C-terminal half is responsible for the 5' incision. The protein is UvrABC system protein C of Pseudomonas protegens (strain DSM 19095 / LMG 27888 / CFBP 6595 / CHA0).